Here is a 484-residue protein sequence, read N- to C-terminus: Poly(A) RNA polymerase GLD2 (484 aa).

Phosphoserine occurs at positions 62 and 69. The short motif at 76-92 is the Nuclear localization signal element; the sequence is KRISDEKAFRLDGKRQR. Serine 95 carries the phosphoserine modification. The Mg(2+) site is built by aspartate 213 and aspartate 215. A PAP-associated domain is found at 386–440; the sequence is SLGDLLLGFLKYYATEFDWNTQMISVREAKAIPRPDDMEWRNKYICVEEPFDGTN.

This sequence belongs to the DNA polymerase type-B-like family. GLD2 subfamily. Interacts with CPEB1, CPEB2, CPSF1 and PABPC1. Interacts with QKI isoform QKI7; promoting recruitment to miRNA miR-122 and miR-122 stabilization. Mg(2+) is required as a cofactor. It depends on Mn(2+) as a cofactor.

It is found in the cytoplasm. The protein localises to the nucleus. The enzyme catalyses RNA(n) + ATP = RNA(n)-3'-adenine ribonucleotide + diphosphate. Its function is as follows. Cytoplasmic poly(A) RNA polymerase that adds successive AMP monomers to the 3'-end of specific RNAs, forming a poly(A) tail. In contrast to the canonical nuclear poly(A) RNA polymerase, it only adds poly(A) to selected cytoplasmic mRNAs. Does not play a role in replication-dependent histone mRNA degradation. Adds a single nucleotide to the 3' end of specific miRNAs, monoadenylation stabilizes and prolongs the activity of some but not all miRNAs. The polypeptide is Poly(A) RNA polymerase GLD2 (Rattus norvegicus (Rat)).